The sequence spans 154 residues: Myoglobin (154 aa).

A Globin domain is found at 2–148 (GLSEAEWQLV…FRKDIAAKYK (147 aa)). Residue serine 4 is modified to Phosphoserine. Histidine 65 provides a ligand contact to nitrite. Residue histidine 65 participates in O2 binding. Phosphothreonine is present on threonine 68. Histidine 94 is a heme b binding site.

The protein belongs to the globin family. In terms of assembly, monomeric.

It is found in the cytoplasm. The protein localises to the sarcoplasm. It catalyses the reaction Fe(III)-heme b-[protein] + nitric oxide + H2O = Fe(II)-heme b-[protein] + nitrite + 2 H(+). The enzyme catalyses H2O2 + AH2 = A + 2 H2O. Monomeric heme protein which primary function is to store oxygen and facilitate its diffusion within muscle tissues. Reversibly binds oxygen through a pentacoordinated heme iron and enables its timely and efficient release as needed during periods of heightened demand. Depending on the oxidative conditions of tissues and cells, and in addition to its ability to bind oxygen, it also has a nitrite reductase activity whereby it regulates the production of bioactive nitric oxide. Under stress conditions, like hypoxia and anoxia, it also protects cells against reactive oxygen species thanks to its pseudoperoxidase activity. The sequence is that of Myoglobin (MB) from Indopacetus pacificus (Longman's beaked whale).